Here is a 290-residue protein sequence, read N- to C-terminus: Ribosomal RNA small subunit methyltransferase A (290 aa).

6 residues coordinate S-adenosyl-L-methionine: Asn-27, Leu-29, Gly-54, Glu-75, Asp-100, and Asn-125.

It belongs to the class I-like SAM-binding methyltransferase superfamily. rRNA adenine N(6)-methyltransferase family. RsmA subfamily.

It localises to the cytoplasm. It carries out the reaction adenosine(1518)/adenosine(1519) in 16S rRNA + 4 S-adenosyl-L-methionine = N(6)-dimethyladenosine(1518)/N(6)-dimethyladenosine(1519) in 16S rRNA + 4 S-adenosyl-L-homocysteine + 4 H(+). Functionally, specifically dimethylates two adjacent adenosines (A1518 and A1519) in the loop of a conserved hairpin near the 3'-end of 16S rRNA in the 30S particle. May play a critical role in biogenesis of 30S subunits. In Streptococcus thermophilus (strain ATCC BAA-491 / LMD-9), this protein is Ribosomal RNA small subunit methyltransferase A.